Reading from the N-terminus, the 922-residue chain is MSNERVSTGSLGERLMLRTRSTRGSVRETLSKAIRSTLGRASSMERKDMPDRPKYGTALTAMTSTTPPSPKDRSSDSGDGDSPRPRKFSSKECARIYFSNTSSEHSSRSNSSTPRRVRHTTASSGYGSLSHLPPISYRKSSDPLNSLMSQSMYVQSPGMHIDEPKCTSLSQRRLYYEDSSETYIPSSPSLTTLKDFMMTNDDETFDDFDFDNDDVKSVISSASTSRIFSVDNRMSKYQKNQSLRQFLNSPVRLRKRGDTSRRDAVEAGFEPRDTVPRCHSTQSLRDVQRVRSYNNSQFQASDLSLNPNGSIRAACDSTSGSVAPTAVVNPARNHVISHRQQHHTSYEKDLIPHHNIDVDRRRSLQALNGSSALYQLNNGGSPNGVRSQFSPSDLSIHTPVHHVGSRVRVSSVNQICDSNSAPQFSIDQRRSVHNIGNPVRNSFVDGIKTTSTPKNQIAVAPLAHKSRHLSESRDEMRGGAERRGSGGQMNLPAYTNYLIRHSGEERLVDGPVTNASDARIAYLEKRIRELELTQKEQSSHSTPSQSRHSSSKSSHFNGSSNLSTSEQLRLQEMSDELANKDRKVTSLESKLLKAYQRIERLNEEYDGKIKNLMYDSERARDDLTRCVDKIQQLENELDETRAAVQNGDHANEQEYHELRDKIWKQERELQESRTLLTRLREKEAEFERMRSEKGYLELKNENLNKKLEAKKRAVEELERSVSTLRLEQTICQQSCSSGSTPLADEMEIMSDIRPSLARPYTKAHSTLGSHNMSPLSHSKSSGLTKSFSNFALNSSKQRDDITANMSRSIREQNRHITMCRAMVVCLKDTVDRMARGENPDVARLLGVKLNVMSESEMEDDEDHEADASQPFSMMSAESALSKQCGKLADLDKDLDTIRCQLADWHGQTNAEGDGDRDVCRVQ.

Polar residues predominate over residues 1-10 (MSNERVSTGS). 4 disordered regions span residues 1–134 (MSNE…HLPP), 250–277 (PVRLRKRGDTSRRDAVEAGFEPRDTVPR), 465–491 (KSRHLSESRDEMRGGAERRGSGGQMNL), and 533–563 (TQKEQSSHSTPSQSRHSSSKSSHFNGSSNLS). Composition is skewed to basic and acidic residues over residues 43-54 (SMERKDMPDRPK) and 70-94 (PKDRSSDSGDGDSPRPRKFSSKECA). Residues 99-113 (SNTSSEHSSRSNSST) are compositionally biased toward low complexity. 2 stretches are compositionally biased toward basic and acidic residues: residues 256-276 (RGDTSRRDAVEAGFEPRDTVP) and 468-484 (HLSESRDEMRGGAERRG). The segment covering 539 to 563 (SHSTPSQSRHSSSKSSHFNGSSNLS) has biased composition (low complexity). Residues 564-728 (TSEQLRLQEM…RSVSTLRLEQ (165 aa)) adopt a coiled-coil conformation.

Its subcellular location is the cytoplasm. It localises to the cytoskeleton. The protein localises to the apical cell membrane. The protein resides in the cell junction. It is found in the hemidesmosome. Its subcellular location is the adherens junction. Functionally, plays a role in the assembly of microtubule arrays in the germline acting redundantly with ptrn-1 to control circumferential microtubule assembly along the body which is necessary for larval development, viability, and morphology and integrity of the epidermis. Required for microtubule stability and anchorage by binding to microtubule minus ends. Recruited to hemidesomosomes in early embryonic elongation to direct the nucleation and growth of non-centrosomal microtubules. In terms of biological role, required for normal nuclear migration in the embryonic epidermis. Directs the assembly of non-centrosomal microtubule arrays that determine the position of nuclei within intracellular compartments in the epidermis and this is independent of ptrn-1 activity. The protein is Non-centrosomal microtubule array protein 1 of Caenorhabditis elegans.